The following is a 206-amino-acid chain: Outer-membrane lipoprotein LolB (206 aa).

An N-terminal signal peptide occupies residues 1–18 (MKTFKFFTALFATAILTA). The N-palmitoyl cysteine moiety is linked to residue Cys19. Cys19 is lipidated: S-diacylglycerol cysteine.

This sequence belongs to the LolB family. Monomer.

It is found in the cell outer membrane. Its function is as follows. Plays a critical role in the incorporation of lipoproteins in the outer membrane after they are released by the LolA protein. The sequence is that of Outer-membrane lipoprotein LolB from Haemophilus influenzae (strain PittGG).